A 195-amino-acid polypeptide reads, in one-letter code: ATP-dependent Clp protease proteolytic subunit (195 aa).

Ser101 functions as the Nucleophile in the catalytic mechanism. His126 is a catalytic residue.

This sequence belongs to the peptidase S14 family. As to quaternary structure, component of the chloroplastic Clp protease core complex.

Its subcellular location is the plastid. The protein resides in the chloroplast stroma. It catalyses the reaction Hydrolysis of proteins to small peptides in the presence of ATP and magnesium. alpha-casein is the usual test substrate. In the absence of ATP, only oligopeptides shorter than five residues are hydrolyzed (such as succinyl-Leu-Tyr-|-NHMec, and Leu-Tyr-Leu-|-Tyr-Trp, in which cleavage of the -Tyr-|-Leu- and -Tyr-|-Trp bonds also occurs).. Cleaves peptides in various proteins in a process that requires ATP hydrolysis. Has a chymotrypsin-like activity. Plays a major role in the degradation of misfolded proteins. This chain is ATP-dependent Clp protease proteolytic subunit, found in Cucumis sativus (Cucumber).